The sequence spans 459 residues: MDEQMNKKYLANKLFETQFALEDLREIVRQSLPTGMSNDQSEHYDEIVSGLGGLLEDLGKKNGQTQPVKIVGDLMCRTREEEFINIQPIQAGGRLTPEARKAVIAYGDGYSTCDNCRKPFRLDKIEKPSISTFHTDLAEFVGMDQARVVPGARRGFQAVASSIIEKGDTVVVSTFAHYTEFLAVEGAGGIVREAPVNEHNILTAESVAHKIDEVKRETGKLPALIMIDHFDYLFCNEHDIYGIGKVAQEYGIPFLYNGAYTVGIMPVNGQKIGADFVVGSGHKSMASAAPSGVLATTEEWADKIFRTTQMVGDVTGRKFGIKEVEFLGCTLMGAPLLSMMASFPHVKERTKHWDEEVKKSNYFINEFLRIEGNEVLSEFPRKHALSKVDTTGSFDKVAKTHKRKGYFFSDELKKRGIAGEFPGATRSWKMSTYGLSWDQIHYLSNSFIEIADKYDININ.

Residues 152–153, Asn-257, and 280–282 contribute to the pyridoxal 5'-phosphate site; these read AR and SGH. Lys-283 carries the post-translational modification N6-(pyridoxal phosphate)lysine.

This sequence belongs to the SepCysS family. In terms of assembly, homodimer. Interacts with SepRS. The cofactor is pyridoxal 5'-phosphate.

It catalyses the reaction O-phospho-L-seryl-tRNA(Cys) + hydrogen sulfide + H(+) = L-cysteinyl-tRNA(Cys) + phosphate. Its function is as follows. Converts O-phospho-L-seryl-tRNA(Cys) (Sep-tRNA(Cys)) to L-cysteinyl-tRNA(Cys) (Cys-tRNA(Cys)). This chain is O-phospho-L-seryl-tRNA:Cys-tRNA synthase 1, found in Methanococcoides burtonii (strain DSM 6242 / NBRC 107633 / OCM 468 / ACE-M).